A 31-amino-acid chain; its full sequence is Cycloviolacin-O23 (31 aa).

A cross-link (cyclopeptide (Gly-Asn)) is located at residues Gly-1–Asn-31. Disulfide bonds link Cys-5–Cys-19, Cys-9–Cys-21, and Cys-14–Cys-28.

This is a cyclic peptide. In terms of tissue distribution, expressed in leaves but not in petals, petioles, roots and runners (at protein level).

In terms of biological role, probably participates in a plant defense mechanism. In Viola odorata (Sweet violet), this protein is Cycloviolacin-O23.